Here is a 409-residue protein sequence, read N- to C-terminus: Peptide chain release factor subunit 1 (409 aa).

It belongs to the eukaryotic release factor 1 family. Heterodimer of two subunits, one of which binds GTP.

The protein resides in the cytoplasm. Directs the termination of nascent peptide synthesis (translation) in response to the termination codons UAA, UAG and UGA. The sequence is that of Peptide chain release factor subunit 1 from Methanopyrus kandleri (strain AV19 / DSM 6324 / JCM 9639 / NBRC 100938).